Here is a 701-residue protein sequence, read N- to C-terminus: L-glutamate oxidase precursor (701 aa).

A signal peptide spans 1–14 (MTTDTARRHTGAER). Positions 69, 88, 89, 97, 123, 124, 354, and 409 each coordinate FAD. Residues 481 to 520 (LALPQSVRNLPTGLLGAHPSVDESRIGEEQVEYYRNSELR) constitute a propeptide that is removed on maturation. Residues E645, W653, and I654 each contribute to the FAD site. Positions 684–701 (RRGAAAATEPMREEALTS) are excised as a propeptide.

It belongs to the flavin monoamine oxidase family. LGOX subfamily. As to quaternary structure, the LGOX precursor forms homodimers. The mature enzyme is a heterohexamer composed of 2 alpha chains, 2 beta chains and 2 gamma chains (alpha2beta2gamma2). Requires FAD as cofactor. The precursor form is proteolytically cleaved by an endopeptidase into alpha, beta and gamma chains, which form the stable mature enzyme. Activation by proteolysis occurs after secretion.

The protein localises to the secreted. It catalyses the reaction L-glutamate + O2 + H2O = H2O2 + 2-oxoglutarate + NH4(+). Produced as a single polypeptide precursor and is activated by proteolytic cleavage. The LGOX precursor is an active enzyme, but it exhibits lower catalytic efficiency and lower thermostability compared with the mature hexameric LGOX. The mature form is strongly inhibited by p-chloromercuribenzoate, but not by CuCl(2), EDTA and diethyldithiocarbamate. In terms of biological role, catalyzes the oxidative deamination of L-glutamate to 2-ketoglutarate along with the production of ammonia and hydrogen peroxide. Shows strict substrate specificity for L-glutamate, and exhibits only very weak activity with L-aspartate. The polypeptide is L-glutamate oxidase precursor (Streptomyces sp).